Here is a 517-residue protein sequence, read N- to C-terminus: Pseudaminic acid cytidylyltransferase and UDP-2,4-diacetamido-2,4,6-trideoxy-beta-L-altropyranose hydrolase (517 aa).

The interval Met1–Ile208 is pseudaminic acid cytidylyltransferase. The UDP-2,4-diacetamido-2,4,6-trideoxy-beta-L-altropyranose hydrolase stretch occupies residues Ala209–Ile517. The active-site Proton acceptor; for UDP-2,4-diacetamido-2,4,6-trideoxy-beta-L-altropyranose hydrolase activity is the His244.

In the N-terminal section; belongs to the CMP-NeuNAc synthase family. This sequence in the C-terminal section; belongs to the PseG family. As to quaternary structure, monomer. The cofactor is Mg(2+).

It catalyses the reaction UDP-2,4-diacetamido-2,4,6-trideoxy-beta-L-altrose + H2O = 2,4-diacetamido-2,4,6-trideoxy-beta-L-altrose + UDP + H(+). The enzyme catalyses pseudaminate + CTP = CMP-pseudaminate + diphosphate. In terms of biological role, catalyzes the fourth and sixth steps in the biosynthesis of pseudaminic acid, a sialic-acid-like sugar that is used to modify flagellin. The C-terminus mediates the fourth step of the pathway and catalyzes the removal of UDP from C-1 of UDP-2,4-diacetamido-2,4,6-trideoxy-beta-L-altropyranose forming 2,4-diacetamido-2,4,6-trideoxy-beta-L-altropyranose. The N-terminal part mediates the last step of the pathway by mediating activation of pseudaminic acid with CMP by forming CMP-pseudaminic acid. In Helicobacter pylori (strain ATCC 700392 / 26695) (Campylobacter pylori), this protein is Pseudaminic acid cytidylyltransferase and UDP-2,4-diacetamido-2,4,6-trideoxy-beta-L-altropyranose hydrolase.